We begin with the raw amino-acid sequence, 542 residues long: CTP synthase (542 aa).

Residues 1 to 265 (MTRYIFVTGG…DDIVVERFGL (265 aa)) form an amidoligase domain region. Ser-13 contributes to the CTP binding site. Residue Ser-13 coordinates UTP. Residues 14–19 (SLGKGI) and Asp-71 each bind ATP. Mg(2+) contacts are provided by Asp-71 and Glu-139. CTP contacts are provided by residues 146–148 (DIE), 186–191 (KTKPTQ), and Lys-222. Residues 186 to 191 (KTKPTQ) and Lys-222 each bind UTP. The 252-residue stretch at 290 to 541 (TIAMVGKYME…VNAALKYSGK (252 aa)) folds into the Glutamine amidotransferase type-1 domain. Gly-351 contributes to the L-glutamine binding site. Cys-378 serves as the catalytic Nucleophile; for glutamine hydrolysis. Residues 379 to 382 (LGMQ), Glu-402, and Arg-469 contribute to the L-glutamine site. Active-site residues include His-514 and Glu-516.

The protein belongs to the CTP synthase family. In terms of assembly, homotetramer.

The catalysed reaction is UTP + L-glutamine + ATP + H2O = CTP + L-glutamate + ADP + phosphate + 2 H(+). The enzyme catalyses L-glutamine + H2O = L-glutamate + NH4(+). It catalyses the reaction UTP + NH4(+) + ATP = CTP + ADP + phosphate + 2 H(+). Its pathway is pyrimidine metabolism; CTP biosynthesis via de novo pathway; CTP from UDP: step 2/2. Allosterically activated by GTP, when glutamine is the substrate; GTP has no effect on the reaction when ammonia is the substrate. The allosteric effector GTP functions by stabilizing the protein conformation that binds the tetrahedral intermediate(s) formed during glutamine hydrolysis. Inhibited by the product CTP, via allosteric rather than competitive inhibition. In terms of biological role, catalyzes the ATP-dependent amination of UTP to CTP with either L-glutamine or ammonia as the source of nitrogen. Regulates intracellular CTP levels through interactions with the four ribonucleotide triphosphates. The polypeptide is CTP synthase (Pseudomonas aeruginosa (strain LESB58)).